The following is a 153-amino-acid chain: Guanyl-specific ribonuclease N1 (153 aa).

Residues 1-20 (MVQLLSAFVSLLSVVAVSGA) form the signal peptide. A propeptide spanning residues 21–49 (AIPAPAPEAVVDVAPETATIEPTGNFTAQ) is cleaved from the precursor. 2 disulfide bridges follow: C51–C59 and C55–C152. H89 is an active-site residue. The Proton acceptor role is filled by E107. The active-site Proton donor is H141.

It belongs to the ribonuclease N1/T1 family.

The enzyme catalyses [RNA] containing guanosine + H2O = an [RNA fragment]-3'-guanosine-3'-phosphate + a 5'-hydroxy-ribonucleotide-3'-[RNA fragment].. The polypeptide is Guanyl-specific ribonuclease N1 (grn) (Neurospora crassa (strain ATCC 24698 / 74-OR23-1A / CBS 708.71 / DSM 1257 / FGSC 987)).